Here is a 222-residue protein sequence, read N- to C-terminus: GEM-like protein 4 (222 aa).

The GRAM domain maps to Lys95 to Gln173.

It belongs to the GEM family.

This is GEM-like protein 4 from Arabidopsis thaliana (Mouse-ear cress).